The sequence spans 124 residues: Small ribosomal subunit protein uS12 (124 aa).

The tract at residues Met1–Gly32 is disordered. The residue at position 89 (Asp89) is a 3-methylthioaspartic acid.

This sequence belongs to the universal ribosomal protein uS12 family. As to quaternary structure, part of the 30S ribosomal subunit. Contacts proteins S8 and S17. May interact with IF1 in the 30S initiation complex.

With S4 and S5 plays an important role in translational accuracy. In terms of biological role, interacts with and stabilizes bases of the 16S rRNA that are involved in tRNA selection in the A site and with the mRNA backbone. Located at the interface of the 30S and 50S subunits, it traverses the body of the 30S subunit contacting proteins on the other side and probably holding the rRNA structure together. The combined cluster of proteins S8, S12 and S17 appears to hold together the shoulder and platform of the 30S subunit. This Nocardioides sp. (strain ATCC BAA-499 / JS614) protein is Small ribosomal subunit protein uS12.